The following is a 259-amino-acid chain: Polycomb group RING finger protein 1 (259 aa).

A2 is modified (N-acetylalanine). The residue at position 3 (S3) is a Phosphoserine. Residue K24 forms a Glycyl lysine isopeptide (Lys-Gly) (interchain with G-Cter in SUMO2) linkage. The segment at C47–N86 adopts an RING-type zinc-finger fold. Residues N86 to P247 are necessary for repressor activity. A Glycyl lysine isopeptide (Lys-Gly) (interchain with G-Cter in SUMO2) cross-link involves residue K88. A required for the interaction with the KDM2B-SKP1 heterodimeric complex region spans residues L150 to K255. Positions E167–K255 are RING-finger and WD40-associated ubiquitin-like domain (RAWUL); sufficient for interaction with BCOR and BCORL1.

Interacts with BCORL1, forming heterodimers. The PCGF1-BCORL1 heterodimeric complex interacts with the KDM2B-SKP1 heterodimeric complex to form a homotetrameric polycomb repression complex 1 (PRC1.1). Component of the repressive BCOR complex containing a Polycomb group subcomplex at least composed of RYBP, RING1 and RNF2/RING2. Specifically interacts with BCOR, RING1 and RNF2/RING2. Component of a PRC1-like complex. Interacts with CBX6, CBX7 and CBX8. Interacts with DPPA4, NANOG, POU5F1 and RYBP.

Its subcellular location is the nucleus. In terms of biological role, component of the Polycomb group (PcG) multiprotein BCOR complex, a complex required to maintain the transcriptionally repressive state of some genes, such as BCL6 and the cyclin-dependent kinase inhibitor, CDKN1A. Transcriptional repressor that may be targeted to the DNA by BCL6; this transcription repressor activity may be related to PKC signaling pathway. Represses CDKN1A expression by binding to its promoter, and this repression is dependent on the retinoic acid response element (RARE element). Promotes cell cycle progression and enhances cell proliferation as well. May have a positive role in tumor cell growth by down-regulating CDKN1A. Component of a Polycomb group (PcG) multiprotein PRC1-like complex, a complex class required to maintain the transcriptionally repressive state of many genes, including Hox genes, throughout development. PcG PRC1 complex acts via chromatin remodeling and modification of histones; it mediates monoubiquitination of histone H2A 'Lys-119', rendering chromatin heritably changed in its expressibility. Within the PRC1-like complex, regulates RNF2 ubiquitin ligase activity. Regulates the expression of DPPA4 and NANOG in the NT2 embryonic carcinoma cells. The chain is Polycomb group RING finger protein 1 (PCGF1) from Bos taurus (Bovine).